The chain runs to 588 residues: Adenine deaminase (588 aa).

Belongs to the metallo-dependent hydrolases superfamily. Adenine deaminase family. Homodimer. Mn(2+) is required as a cofactor.

It carries out the reaction adenine + H2O + H(+) = hypoxanthine + NH4(+). The chain is Adenine deaminase from Shigella flexneri serotype 5b (strain 8401).